The chain runs to 249 residues: Electron transfer flavoprotein subunit beta (249 aa).

This sequence belongs to the ETF beta-subunit/FixA family. As to quaternary structure, heterodimer of an alpha and a beta subunit. Requires FAD as cofactor. It depends on AMP as a cofactor.

In terms of biological role, the electron transfer flavoprotein serves as a specific electron acceptor for other dehydrogenases. It transfers the electrons to the main respiratory chain via ETF-ubiquinone oxidoreductase (ETF dehydrogenase). This Bradyrhizobium diazoefficiens (strain JCM 10833 / BCRC 13528 / IAM 13628 / NBRC 14792 / USDA 110) protein is Electron transfer flavoprotein subunit beta (etfB).